The sequence spans 360 residues: MVPPTAIAEASRSGGEPAIKDPVKDTILTPRFYTTDFEAMAAMDLRPNQEELEAICEEFRKDYNRHHFVRNEAFDGAADKLDPETRRVFVEFLEQSCTSEFSGFLLYKELSRRIKQKNPLLAECFAHMARDEARHAGFLNKAMGDFGVQLDLGFLTANKAYTFFKPKFIFYATYLSEKIGYWRYIAIYRHLEQNPDSKIFPIFNFFENWCQDENRHGDFFDALMKAQPSSVRGLQARLWCRFFLLAVFATMYVRDVARKEFYEALGLDAREYDKYVIAKTNETSARVFPVVLNVDHPKFYERLERIVGNNNALSQADASGASAPVRLLRKLPFWGANALEMAKLFFAAPIRSENYQPAIR.

The tract at residues 1–20 is disordered; it reads MVPPTAIAEASRSGGEPAIK.

Belongs to the AcsF family. The cofactor is Fe cation.

It carries out the reaction Mg-protoporphyrin IX 13-monomethyl ester + 3 NADPH + 3 O2 + 2 H(+) = 3,8-divinyl protochlorophyllide a + 3 NADP(+) + 5 H2O. It functions in the pathway porphyrin-containing compound metabolism; chlorophyll biosynthesis (light-independent). In terms of biological role, catalyzes the formation of the isocyclic ring in chlorophyll biosynthesis. Mediates the cyclase reaction, which results in the formation of divinylprotochlorophyllide (Pchlide) characteristic of all chlorophylls from magnesium-protoporphyrin IX 13-monomethyl ester (MgPMME). This chain is Magnesium-protoporphyrin IX monomethyl ester [oxidative] cyclase, found in Synechococcus sp. (strain RCC307).